The following is a 399-amino-acid chain: Carbamoyl phosphate synthase arginine-specific small chain (399 aa).

The region spanning Asp187–Leu379 is the Glutamine amidotransferase type-1 domain. Cys267 serves as the catalytic Nucleophile. Active-site residues include His352 and Glu354.

Belongs to the CarA family. In terms of assembly, heterodimer composed of 2 chains; the small (or glutamine) chain promotes the hydrolysis of glutamine to ammonia, which is used by the large (or ammonia) chain to synthesize carbamoyl phosphate.

The protein localises to the cytoplasm. The catalysed reaction is hydrogencarbonate + L-glutamine + 2 ATP + H2O = carbamoyl phosphate + L-glutamate + 2 ADP + phosphate + 2 H(+). It carries out the reaction L-glutamine + H2O = L-glutamate + NH4(+). The protein operates within amino-acid biosynthesis; L-arginine biosynthesis; carbamoyl phosphate from bicarbonate: step 1/1. Its function is as follows. Small subunit of the arginine-specific carbamoyl phosphate synthase (CPSase). CPSase catalyzes the formation of carbamoyl phosphate from the ammonia moiety of glutamine, carbonate, and phosphate donated by ATP, constituting the first step of 2 biosynthetic pathways, one leading to arginine and/or urea and the other to pyrimidine nucleotides. The small subunit (glutamine amidotransferase) binds and cleaves glutamine to supply the large subunit with the substrate ammonia. This Eremothecium gossypii (strain ATCC 10895 / CBS 109.51 / FGSC 9923 / NRRL Y-1056) (Yeast) protein is Carbamoyl phosphate synthase arginine-specific small chain (CPA1).